The primary structure comprises 127 residues: Modulator protein MzrA (127 aa).

Topologically, residues 1–10 are cytoplasmic; it reads MVISPLALRR. Residues 11–31 form a helical membrane-spanning segment; the sequence is LSYGLIALVLLSALILVWTAL. The Periplasmic portion of the chain corresponds to 32 to 127; the sequence is QRQESTLAIR…RLRDTSHRFG (96 aa).

Belongs to the MzrA family. As to quaternary structure, interacts with EnvZ.

The protein resides in the cell inner membrane. Functionally, modulates the activity of the EnvZ/OmpR two-component regulatory system, probably by directly modulating EnvZ enzymatic activity and increasing stability of phosphorylated OmpR. This chain is Modulator protein MzrA, found in Enterobacter sp. (strain 638).